Consider the following 633-residue polypeptide: Carbon catabolite-derepressing protein kinase (633 aa).

Residues 1 to 16 (MSSNNNTNTAPANANS) show a composition bias toward low complexity. Residues 1–46 (MSSNNNTNTAPANANSSHHHHHHHHHHHHHGHGGSNSTLNNPKSSL) are disordered. A compositionally biased stretch (basic residues) spans 17 to 32 (SHHHHHHHHHHHHHGH). In terms of domain architecture, Protein kinase spans 55–306 (YQIVKTLGEG…IHEIMQDDWF (252 aa)). ATP contacts are provided by residues 61 to 69 (LGEGSFGKV) and K84. Residue D177 is the Proton acceptor of the active site. At T210 the chain carries Phosphothreonine; by autocatalysis. Positions 313–392 (YLLPPDLKPH…YMLIKENKSL (80 aa)) are auto-inhibitory domain (AID). A disordered region spans residues 317-345 (PDLKPHPEEENENNDSKKDGSSPDNDEID). Basic and acidic residues predominate over residues 319–337 (LKPHPEEENENNDSKKDGS). Residues 348–389 (LVNILSSTMGYEKDEIYESLESSEDTPAFNEIRDAYMLIKEN) enclose the UBA domain. A disordered region spans residues 409-434 (FLSQSPPTFQQQSKSHQKSQVDHETA). S413 carries the phosphoserine modification. A Glycyl lysine isopeptide (Lys-Gly) (interchain with G-Cter in ubiquitin) cross-link involves residue K461. S487 is subject to Phosphoserine. K549 participates in a covalent cross-link: Glycyl lysine isopeptide (Lys-Gly) (interchain with G-Cter in SUMO). A Phosphoserine modification is found at S632.

It belongs to the protein kinase superfamily. CAMK Ser/Thr protein kinase family. SNF1 subfamily. In terms of assembly, component of the AMP-activated protein kinase complex also known as the SNF1 kinase complex (Snf1c), a heterotrimeric complex composed of an alpha subunit (SNF1), a regulatory subunit beta (GAL83 and substoichiometric alternate beta subunits SIP1 and SIP2), and a regulatory subunit gamma (SNF4). Interacts with the transcriptional activator SIP4. Interacts with SAK1. Interacts with CTK1: Interacts with adenylate cyclase CYR1. In terms of processing, phosphorylation at Thr-210 in response to glucose limitation leads to activation of kinase activity. ADP, but not AMP, protects the enzyme from dephosphorylation at Thr-210 by GLC7. Post-translationally, sumoylation by the SUMO (E3) ligase MMS21 leads to inhibition by interaction of SUMO attached to Lys-549 with a SUMO-interacting sequence motif located near the active site of SNF1, and by targeting SNF1 for glucose-induced destruction via the SLX5-SLX8 (SUMO-directed) ubiquitin ligase.

It is found in the cytoplasm. Its subcellular location is the nucleus. The protein resides in the nucleus membrane. The catalysed reaction is L-seryl-[protein] + ATP = O-phospho-L-seryl-[protein] + ADP + H(+). The enzyme catalyses L-threonyl-[protein] + ATP = O-phospho-L-threonyl-[protein] + ADP + H(+). With respect to regulation, the kinase activity is positively regulated by SNF4 via sequestration of the SNF1 auto-inhibitory domain (AID). Serine/threonine protein kinase essential for release from glucose repression. Catalytic subunit of the AMP-activated protein kinase complex also known as the SNF1 kinase complex (Snf1c), a central regulator of cellular energy homeostasis, which, in response to a fall in intracellular ATP levels, activates energy-producing pathways and inhibits energy-consuming processes. The complex phosphorylates histone H3 to form H3S10ph, which promotes H3K14ac formation, leading to transcriptional activation through TBP recruitment to the promoters. The complex also negatively regulates the HOG1 MAPK pathway in ER stress response including unfolded protein response (UPR). Under nutrient/energy depletion, the complex phosphorylates and activates PAS kinase PSK1 which in turn activates PBS1, leading to the inhibition of the TORC1 signaling pathway. SNF1 also interacts and phosphorylates adenylate cyclase CYR1 and negatively regulates the protein kinase A signaling pathway. Also phosphorylates and regulates the transcriptional activator CAT8. This is Carbon catabolite-derepressing protein kinase from Saccharomyces cerevisiae (strain ATCC 204508 / S288c) (Baker's yeast).